We begin with the raw amino-acid sequence, 399 residues long: Elongation factor Tu (399 aa).

The tr-type G domain maps to 10-204 (KPHVNIGTIG…SVDESIPEPE (195 aa)). Residues 19-26 (GHVDHGKT) are G1. 19-26 (GHVDHGKT) is a binding site for GTP. Thr-26 provides a ligand contact to Mg(2+). The G2 stretch occupies residues 60-64 (GITIN). Residues 81 to 84 (DCPG) are G3. GTP is bound by residues 81-85 (DCPGH) and 136-139 (NKCD). The tract at residues 136-139 (NKCD) is G4. A G5 region spans residues 174 to 176 (SAL).

It belongs to the TRAFAC class translation factor GTPase superfamily. Classic translation factor GTPase family. EF-Tu/EF-1A subfamily. In terms of assembly, monomer.

The protein resides in the cytoplasm. It carries out the reaction GTP + H2O = GDP + phosphate + H(+). Functionally, GTP hydrolase that promotes the GTP-dependent binding of aminoacyl-tRNA to the A-site of ribosomes during protein biosynthesis. This Prochlorococcus marinus (strain MIT 9211) protein is Elongation factor Tu.